The following is a 743-amino-acid chain: Putative metallophosphoesterase At3g03305 (743 aa).

The N-terminal stretch at 1–40 (MESIGDDDELRSKTVSLPRRISFTILLLLLLISLSTRVSG) is a signal peptide. Positions 66, 68, and 101 each coordinate a divalent metal cation. Helical transmembrane passes span 514–534 (ILWP…CIII), 565–585 (MPVV…FPWF), 623–643 (VMVV…LVVC), 687–704 (LFRK…WKHF), and 716–736 (MNVV…LYVI).

This sequence belongs to the metallophosphoesterase superfamily. It depends on a divalent metal cation as a cofactor.

The protein resides in the membrane. This chain is Putative metallophosphoesterase At3g03305, found in Arabidopsis thaliana (Mouse-ear cress).